Here is a 587-residue protein sequence, read N- to C-terminus: Potassium-transporting ATPase potassium-binding subunit (587 aa).

The next 4 membrane-spanning stretches (helical) occupy residues 1 to 21 (MSTS…LWVT), 60 to 80 (PVYA…LYLL), 89 to 109 (LNLG…VSFM), and 131 to 151 (GLAV…IAVV). The tract at residues 162 to 188 (AVGGPGGPNGPGGPGGPNGPGAGSRDD) is disordered. Gly residues predominate over residues 164-183 (GGPGGPNGPGGPGGPNGPGA). 7 helical membrane-spanning segments follow: residues 208-228 (IRIL…GGAI), 280-300 (PTSW…FSLP), 314-334 (LAIV…NAAF), 409-429 (GLYG…LMIG), 449-469 (LYFL…MGLP), 514-534 (ALGL…LGMA), and 557-577 (FAGM…FPAL).

This sequence belongs to the KdpA family. The system is composed of three essential subunits: KdpA, KdpB and KdpC.

The protein resides in the cell membrane. Part of the high-affinity ATP-driven potassium transport (or Kdp) system, which catalyzes the hydrolysis of ATP coupled with the electrogenic transport of potassium into the cytoplasm. This subunit binds the extracellular potassium ions and delivers the ions to the membrane domain of KdpB through an intramembrane tunnel. This Frankia alni (strain DSM 45986 / CECT 9034 / ACN14a) protein is Potassium-transporting ATPase potassium-binding subunit.